A 111-amino-acid chain; its full sequence is Iron-sulfur cluster insertion protein ErpA (111 aa).

Iron-sulfur cluster-binding residues include Cys-39, Cys-103, and Cys-105.

It belongs to the HesB/IscA family. Homodimer. The cofactor is iron-sulfur cluster.

Required for insertion of 4Fe-4S clusters for at least IspG. This Acinetobacter baumannii (strain SDF) protein is Iron-sulfur cluster insertion protein ErpA.